The sequence spans 667 residues: Putative L-type lectin-domain containing receptor kinase I.4 (667 aa).

The signal sequence occupies residues 1-21 (MDCRLHLVLFFSCVCLICLSG). Residues 22–294 (QQETGFVYNG…PREEKKKLHP (273 aa)) are Extracellular-facing. A legume-lectin like region spans residues 24 to 257 (ETGFVYNGFH…NQYILGWSFS (234 aa)). N-linked (GlcNAc...) asparagine glycosylation is found at Asn55, Asn110, Asn124, Asn128, Asn181, Asn204, and Asn225. The chain crosses the membrane as a helical span at residues 295–315 (LLIGLVILLVIPVLMVLGGVY). At 316 to 667 (WYRRKKYAEV…THSILEGYGR (352 aa)) the chain is on the cytoplasmic side. Residues 350-625 (FVKDALVGKG…QYLSQKQPLP (276 aa)) enclose the Protein kinase domain. Residues 356–364 (VGKGGFGKV) and Lys378 contribute to the ATP site. Residue Asp474 is the Proton acceptor of the active site.

It in the C-terminal section; belongs to the protein kinase superfamily. Ser/Thr protein kinase family. The protein in the N-terminal section; belongs to the leguminous lectin family.

The protein localises to the cell membrane. It carries out the reaction L-seryl-[protein] + ATP = O-phospho-L-seryl-[protein] + ADP + H(+). The enzyme catalyses L-threonyl-[protein] + ATP = O-phospho-L-threonyl-[protein] + ADP + H(+). The sequence is that of Putative L-type lectin-domain containing receptor kinase I.4 (LECRK14) from Arabidopsis thaliana (Mouse-ear cress).